A 175-amino-acid chain; its full sequence is Catabolic 3-dehydroquinase (175 aa).

Catalysis depends on tyrosine 23, which acts as the Proton acceptor. Positions 74, 80, and 87 each coordinate substrate. Histidine 100 (proton donor) is an active-site residue. Residues 101-102 (IS) and arginine 111 contribute to the substrate site.

This sequence belongs to the type-II 3-dehydroquinase family. Homododecamer. Adopts a ring-like structure, composed of an arrangement of two hexameric rings stacked on top of one another.

The enzyme catalyses 3-dehydroquinate = 3-dehydroshikimate + H2O. The protein operates within aromatic compound metabolism; 3,4-dihydroxybenzoate biosynthesis; 3,4-dihydroxybenzoate from 3-dehydroquinate: step 1/2. Is involved in the catabolism of quinate. Allows the utilization of quinate as carbon source via the beta-ketoadipate pathway. In Talaromyces marneffei (strain ATCC 18224 / CBS 334.59 / QM 7333) (Penicillium marneffei), this protein is Catabolic 3-dehydroquinase.